The chain runs to 178 residues: Conodipine-P2 (178 aa).

The N-terminal stretch at 1–24 (MKLLAPVLWAMAALGVTWLVAVDS) is a signal peptide. 4-hydroxyproline is present on residues Pro-38, Pro-42, and Pro-49. Residue His-54 is part of the active site. Positions 98–130 (KREVTSHRATSIAHSRLWKTALDQKSFLNRKAR) are cleaved as a propeptide — interchain peptide. At Gln-131 the chain carries Pyrrolidone carboxylic acid. Position 137 is a 4-hydroxyproline (Pro-137).

Belongs to the phospholipase A2 family. Group IX subfamily. As to quaternary structure, heterodimer of an alpha and a beta chain; probably disulfide-linked. Ca(2+) serves as cofactor. As to expression, expressed by the venom duct.

The protein resides in the secreted. It carries out the reaction a 1,2-diacyl-sn-glycero-3-phosphocholine + H2O = a 1-acyl-sn-glycero-3-phosphocholine + a fatty acid + H(+). Catalyzes the calcium-dependent hydrolysis of the 2-acyl groups in 3-sn-phosphoglycerides. This is Conodipine-P2 from Conus purpurascens (Purple cone).